A 275-amino-acid chain; its full sequence is Succinate dehydrogenase [ubiquinone] iron-sulfur subunit, mitochondrial (275 aa).

A mitochondrion-targeting transit peptide spans 1 to 24 (MFSRRIQVLSPFLKHFVNRNARMM). In terms of domain architecture, 2Fe-2S ferredoxin-type spans 57–137 (PEVKPKLQKY…PTKIYPLPHC (81 aa)). Residues Cys-98, Cys-103, Cys-106, and Cys-118 each contribute to the [2Fe-2S] cluster site. In terms of domain architecture, 4Fe-4S ferredoxin-type spans 178 to 208 (DRAKLDGLYECILCACCSTSCPSYWWNSEEY). 3 residues coordinate [4Fe-4S] cluster: Cys-188, Cys-191, and Cys-194. [3Fe-4S] cluster is bound at residue Cys-198. A ubiquinone is bound at residue Trp-203. [3Fe-4S] cluster is bound by residues Cys-245 and Cys-251. A [4Fe-4S] cluster-binding site is contributed by Cys-255.

This sequence belongs to the succinate dehydrogenase/fumarate reductase iron-sulfur protein family. In terms of assembly, component of complex II composed of four subunits: a flavoprotein (FP), an iron-sulfur protein (IP), and a cytochrome b composed of a large and a small subunit. The cofactor is [2Fe-2S] cluster. Requires [3Fe-4S] cluster as cofactor. It depends on [4Fe-4S] cluster as a cofactor.

The protein resides in the mitochondrion inner membrane. The catalysed reaction is a quinone + succinate = fumarate + a quinol. Its pathway is carbohydrate metabolism; tricarboxylic acid cycle; fumarate from succinate (eukaryal route): step 1/1. Its function is as follows. Iron-sulfur protein (IP) subunit of succinate dehydrogenase (SDH) that is involved in complex II of the mitochondrial electron transport chain and is responsible for transferring electrons from succinate to ubiquinone (coenzyme Q). The polypeptide is Succinate dehydrogenase [ubiquinone] iron-sulfur subunit, mitochondrial (sdh2) (Schizosaccharomyces pombe (strain 972 / ATCC 24843) (Fission yeast)).